The chain runs to 626 residues: 4-hydroxy-3-methylbut-2-en-1-yl diphosphate synthase (flavodoxin) (626 aa).

The [4Fe-4S] cluster site is built by C521, C524, C555, and E562.

It belongs to the IspG family. Requires [4Fe-4S] cluster as cofactor.

It carries out the reaction (2E)-4-hydroxy-3-methylbut-2-enyl diphosphate + oxidized [flavodoxin] + H2O + 2 H(+) = 2-C-methyl-D-erythritol 2,4-cyclic diphosphate + reduced [flavodoxin]. The protein operates within isoprenoid biosynthesis; isopentenyl diphosphate biosynthesis via DXP pathway; isopentenyl diphosphate from 1-deoxy-D-xylulose 5-phosphate: step 5/6. Converts 2C-methyl-D-erythritol 2,4-cyclodiphosphate (ME-2,4cPP) into 1-hydroxy-2-methyl-2-(E)-butenyl 4-diphosphate. This Bacteroides fragilis (strain ATCC 25285 / DSM 2151 / CCUG 4856 / JCM 11019 / LMG 10263 / NCTC 9343 / Onslow / VPI 2553 / EN-2) protein is 4-hydroxy-3-methylbut-2-en-1-yl diphosphate synthase (flavodoxin).